The chain runs to 316 residues: Probable cell division protein WhiA (316 aa).

The segment at residues Ser280–Thr313 is a DNA-binding region (H-T-H motif).

The protein belongs to the WhiA family.

Functionally, involved in cell division and chromosome segregation. The sequence is that of Probable cell division protein WhiA from Clostridium perfringens (strain ATCC 13124 / DSM 756 / JCM 1290 / NCIMB 6125 / NCTC 8237 / Type A).